The sequence spans 153 residues: Ribosomal RNA large subunit methyltransferase H (153 aa).

S-adenosyl-L-methionine is bound by residues Leu75, Gly102, and 121–126; that span reads LSPLTM.

This sequence belongs to the RNA methyltransferase RlmH family. In terms of assembly, homodimer.

It localises to the cytoplasm. The enzyme catalyses pseudouridine(1915) in 23S rRNA + S-adenosyl-L-methionine = N(3)-methylpseudouridine(1915) in 23S rRNA + S-adenosyl-L-homocysteine + H(+). In terms of biological role, specifically methylates the pseudouridine at position 1915 (m3Psi1915) in 23S rRNA. This Nitratiruptor sp. (strain SB155-2) protein is Ribosomal RNA large subunit methyltransferase H.